We begin with the raw amino-acid sequence, 566 residues long: Glucose-6-phosphate isomerase, cytosolic (566 aa).

Residue glutamate 360 is the Proton donor of the active site. Active-site residues include histidine 391 and lysine 516.

Belongs to the GPI family. In terms of assembly, homodimer.

The protein resides in the cytoplasm. The catalysed reaction is alpha-D-glucose 6-phosphate = beta-D-fructose 6-phosphate. It functions in the pathway carbohydrate degradation; glycolysis; D-glyceraldehyde 3-phosphate and glycerone phosphate from D-glucose: step 2/4. The sequence is that of Glucose-6-phosphate isomerase, cytosolic (PGIC) from Spinacia oleracea (Spinach).